The primary structure comprises 343 residues: Armadillo repeat-containing protein 10 (343 aa).

A helical membrane pass occupies residues 5–27 (RGAGWVAAGLLLGAGACYCIYRL). The interval 43–83 (SKSAGALEEGTSEGQLCGRSARPQTGGTWESQWSKTSQPED) is disordered. Ser45 is subject to Phosphoserine. Glu50 bears the Phosphothreonine mark. Residues 64 to 82 (RPQTGGTWESQWSKTSQPE) are compositionally biased toward polar residues. Thr85 is modified (phosphothreonine). The ARM repeat unit spans residues 138–180 (GGIPIVANKINHSNQSIKEKALNALNNLSVNVENQIKIKIYIS).

As to quaternary structure, interacts with the DNA-binding domain of p53/TP53. Expressed in all tissues tested with higher expression in placenta, liver, kidney, heart and brain.

It localises to the endoplasmic reticulum membrane. The protein resides in the mitochondrion outer membrane. In terms of biological role, may play a role in cell survival and cell growth. May suppress the transcriptional activity of p53/TP53. The protein is Armadillo repeat-containing protein 10 (ARMC10) of Homo sapiens (Human).